Here is an 840-residue protein sequence, read N- to C-terminus: Lon protease homolog 2, peroxisomal (840 aa).

The region spanning 13 to 222 is the Lon N-terminal domain; it reads LPLLCTHDGV…KALPLLTRQI (210 aa). 375 to 382 contributes to the ATP binding site; that stretch reads GPPGVGKT. The disordered stretch occupies residues 583–606; it reads QKVSRSEAPTEQHAEQNTDSKVED. The span at 584-606 shows a compositional bias: basic and acidic residues; that stretch reads KVSRSEAPTEQHAEQNTDSKVED. A Lon proteolytic domain is found at 641 to 825; sequence LTLPGVAIGL…DEVLNAAFDG (185 aa). Catalysis depends on residues Ser731 and Lys774. The short motif at 838 to 840 is the Microbody targeting signal element; the sequence is SKL.

The protein belongs to the peptidase S16 family.

The protein resides in the peroxisome matrix. The enzyme catalyses Hydrolysis of proteins in presence of ATP.. ATP-dependent serine protease that mediates the selective degradation of misfolded and unassembled polypeptides in the peroxisomal matrix. Necessary for type 2 peroxisome targeting signal (PTS2)-containing protein processing and facilitates peroxisome matrix protein import. The sequence is that of Lon protease homolog 2, peroxisomal (lonp2) from Danio rerio (Zebrafish).